We begin with the raw amino-acid sequence, 1186 residues long: MRFVLCCTLIALAALSVKAFGHHPGNRDTVEVKNRKYNAASSESSYLNKDNDSISAGAHRAKSVEQSQDKSKYTSGPEGVSYSGRSQNYKDSKQAYADYHSDPNGGSASAGQSRDSSLRERNVHYVSDGEAVAASSDARDENRSAQQNAQANWNADGSYGVSADRSGSASSRRRQANYYSDKDITAASKDDSRADSSRRSNAYYNRDSDGSESAGLSDRSASSSKNDNVFVYRTKDSIGGQAKSSRSSHSQESDAYYNSSPDGSYNAGTRDSSISNKKKASSTIYADKDQIRAANDRSSSKQLKQSSAQISSGPEGTSVSSKDRQYSNDKRSKSDAYVGRDGTVAYSNKDSEKTSRQSNTNYADQNSVRSDSAASDQTSKSYDRGYSDKNIVAHSSGSRGSQNQKSSSYRADKDGFSSSTNTEKSKFSSSNSVVETSDGASASRESSAEDTKSSNSNVQSDEKSASQSSSSRSSQESASYSSSSSSSTLSEDSSEVDIDLGNLGWWWNSDNKVQRAAGGATKSGASSSTQATTVSGADDSADSYTWWWNPRRSSSSSSSASSSSSGSNVGGSSQSSGSSTSGSNARGHLGTVSSTGSTSNTDSSSKSAGSRTSGGSSTYGYSSSHRGGSVSSTGSSSNTDSSTKNAGSSTSGGSSTYGYSSSHRGGSVSSTGSSSNTDSSTKSAGSSTSGGSSTYGYSSRHRGGRVSSTGSSSTTDASSNSVGSSTSGGSSTYGYSSNSRDGSVSSTGSSSNTDSNSNSAGSSTSGGSSTYGYSSNSRDGSVSSTGSSSNTDSNSNSAGSSTSGGSSTYGYSSNSRDGSVSSTGSSSNTDASTDLTGSSTSGGSSTYGYSSDSRDGSVSSTGSSSNTDASTDLAGSSTSGGSSTYGYSSDCGDGSVSSTGSSSNTDASTDLAGSSTSGGSSTYGYSSDSRDGSVSSTGSSSNTDASTDLAGSSTSGGSSTYGYSSNSRDGSVSSTGSSSNTDASTDLTGSSTSGGSSTYGYSSSNRDGSVLATGSSSNTDASTTEESTTSAGSSTEGYSSSSHDGSVTSTDGSSTSGGASSSSASTAKSDAASSEDGFWWWNRRKSGSGHKSATVQSSTTDKTSTDSASSTDSTSSTSGASTTTSGSSSTSGGSSTSDASSTSSSVSRSHHSGVNRLLHKPGQGKICLCFENIFDIPYHLRKNIGV.

The first 21 residues, 1 to 21, serve as a signal peptide directing secretion; the sequence is MRFVLCCTLIALAALSVKAFG. Composition is skewed to polar residues over residues 39-48 and 104-115; these read AASSESSYLN and NGGSASAGQSRD. 3 disordered regions span residues 39-119, 131-494, and 518-1157; these read AASS…SSLR, AVAA…EDSS, and GGAT…VNRL. Residues 145–155 show a composition bias toward low complexity; that stretch reads AQQNAQANWNA. Residues 180 to 198 show a composition bias toward basic and acidic residues; sequence SDKDITAASKDDSRADSSR. Residues 211-224 are compositionally biased toward low complexity; the sequence is SESAGLSDRSASSS. Residues 256 to 275 are compositionally biased toward polar residues; the sequence is YYNSSPDGSYNAGTRDSSIS. Over residues 286-299 the composition is skewed to basic and acidic residues; it reads ADKDQIRAANDRSS. Low complexity predominate over residues 300–312; that stretch reads SKQLKQSSAQISS. Residues 321–334 are compositionally biased toward basic and acidic residues; the sequence is SKDRQYSNDKRSKS. Composition is skewed to polar residues over residues 356 to 380, 393 to 409, and 416 to 445; these read RQSN…QTSK, AHSS…SSSY, and FSSS…ASRE. Composition is skewed to low complexity over residues 465 to 491, 518 to 537, 553 to 698, 705 to 1004, 1015 to 1075, and 1097 to 1145; these read ASQS…TLSE, GGAT…VSGA, SSSS…YGYS, RVSS…YSSS, SSSN…ASSE, and SSTT…TSSS. Repeat copies occupy residues 593–630, 631–668, 669–706, 707–744, 745–782, 783–820, 821–858, 859–896, 897–934, 935–972, and 973–1010. A compositionally biased stretch (basic residues) spans 1148–1157; that stretch reads RSHHSGVNRL.

Produced exclusively in the middle (MSG) section of silk glands.

The protein localises to the secreted. Functionally, provides the silk fibroin thread with a sticky coating. Acts as a cement by sticking silk threads together. This chain is Sericin 1 (ser1), found in Bombyx mori (Silk moth).